An 876-amino-acid polypeptide reads, in one-letter code: MSKSTAEIRQAFLDFFHSKGHQVVASSSLVPHNDPTLLFTNAGMNQFKDVFLGLDKRNYSRATTSQRCVRAGGKHNDLENVGYTARHHTFFEMLGNFSFGDYFKHDAIQFAWELLTSEKWFALPKERLWVTVYESDDEAYEIWEKEVGIPRERIIRIGDNKGAPYASDNFWQMGDTGPCGPCTEIFYDHGDHIWGGPPGSPEEDGDRYIEIWNIVFMQFNRQADGTMEPLPKPSVDTGMGLERIAAVLQHVNSNYDIDLFRTLIQAVAKVTGATDLSNKSLRVIADHIRSCAFLIADGVMPSNESRGYVLRRIIRRAVRHGNMLGAKETFFYKLVGPLIDVMGSAGEDLKRQQAQVEQVLKTEEEQFARTLERGLALLDEELAKLSGDTLDGETAFRLYDTYGFPVDLTADVCRERNIKVDEAGFDAAMEEQRRRAREASGFGADYNAMIRVDSASEFKGYDHLELNGKVTALFVDGKAVDAINAGQEAVVVLDQTPFYAESGGQVGDKGELKGANFSFAVEDTQKYGQAIGHIGKLAAGSLKVGDAVQADVDEARRARIRLNHSATHLMHAALRQVLGTHVSQKGSLVNDKVLRFDFSHNEAMKPEEIRAVEDLVNAQIRRNLPIETNIMDLEAAKAKGAMALFGEKYDERVRVLSMGDFSTELCGGTHASRTGDIGLFRIISESGTAAGVRRIEAVTGEGAIATVHADSDRLSEVAHLLKGDSNNLADKVRSVLERTRQLEKELQQLKEQAAAQESANLSSKAIDVNGVKLLVSELSGVEPKMLRTMVDDLKNQLGSTIIVLATVAEGKVSLIAGVSKDVTDRVKAGELIGMVAQQVGGKGGGRPDMAQAGGTDAAALPAALASVKGWVSAKLQ.

Lysine 74 is modified (N6-acetyllysine). 4 residues coordinate Zn(2+): histidine 564, histidine 568, cysteine 666, and histidine 670.

This sequence belongs to the class-II aminoacyl-tRNA synthetase family. In terms of assembly, homotetramer. Zn(2+) serves as cofactor.

It localises to the cytoplasm. The enzyme catalyses tRNA(Ala) + L-alanine + ATP = L-alanyl-tRNA(Ala) + AMP + diphosphate. Functionally, catalyzes the attachment of alanine to tRNA(Ala) in a two-step reaction: alanine is first activated by ATP to form Ala-AMP and then transferred to the acceptor end of tRNA(Ala). Also edits incorrectly charged Ser-tRNA(Ala) and Gly-tRNA(Ala) via its editing domain. This chain is Alanine--tRNA ligase, found in Escherichia coli O1:K1 / APEC.